The following is a 430-amino-acid chain: Serine--tRNA ligase (430 aa).

The segment at 103–127 (LPNIPDDDVPDGRDENDNQEVSRWG) is disordered. 237–239 (TAE) lines the L-serine pocket. Residue 268–270 (RSE) coordinates ATP. Position 291 (glutamate 291) interacts with L-serine. 355–358 (EISS) contacts ATP. Residue serine 391 participates in L-serine binding.

Belongs to the class-II aminoacyl-tRNA synthetase family. Type-1 seryl-tRNA synthetase subfamily. In terms of assembly, homodimer. The tRNA molecule binds across the dimer.

Its subcellular location is the cytoplasm. It catalyses the reaction tRNA(Ser) + L-serine + ATP = L-seryl-tRNA(Ser) + AMP + diphosphate + H(+). The catalysed reaction is tRNA(Sec) + L-serine + ATP = L-seryl-tRNA(Sec) + AMP + diphosphate + H(+). It participates in aminoacyl-tRNA biosynthesis; selenocysteinyl-tRNA(Sec) biosynthesis; L-seryl-tRNA(Sec) from L-serine and tRNA(Sec): step 1/1. Functionally, catalyzes the attachment of serine to tRNA(Ser). Is also able to aminoacylate tRNA(Sec) with serine, to form the misacylated tRNA L-seryl-tRNA(Sec), which will be further converted into selenocysteinyl-tRNA(Sec). In Sodalis glossinidius (strain morsitans), this protein is Serine--tRNA ligase.